Consider the following 229-residue polypeptide: Demethylmenaquinone methyltransferase (229 aa).

S-adenosyl-L-methionine contacts are provided by residues T57, D77, and 101–102; that span reads DV.

This sequence belongs to the class I-like SAM-binding methyltransferase superfamily. MenG/UbiE family.

It carries out the reaction a 2-demethylmenaquinol + S-adenosyl-L-methionine = a menaquinol + S-adenosyl-L-homocysteine + H(+). The protein operates within quinol/quinone metabolism; menaquinone biosynthesis; menaquinol from 1,4-dihydroxy-2-naphthoate: step 2/2. Its function is as follows. Methyltransferase required for the conversion of demethylmenaquinol (DMKH2) to menaquinol (MKH2). The polypeptide is Demethylmenaquinone methyltransferase (Chlamydia trachomatis serovar A (strain ATCC VR-571B / DSM 19440 / HAR-13)).